A 103-amino-acid polypeptide reads, in one-letter code: Protamine-3 (103 aa).

The disordered stretch occupies residues 1-103 (MGSRCAKLNT…QSPEPKRTPS (103 aa)). Residues 10–21 (TGQSPGHSPGHS) show a composition bias toward low complexity. Positions 50 to 66 (GEEEEEEEEEGEEEEKE) are enriched in acidic residues. Over residues 78–90 (EPERQEEGHKDNA) the composition is skewed to basic and acidic residues. Serine 95 carries the post-translational modification Phosphoserine.

Belongs to the protamine P3 family.

The protein resides in the nucleus. It is found in the chromosome. Functionally, protamines substitute for histones in the chromatin of sperm during the haploid phase of spermatogenesis. They compact sperm DNA into a highly condensed, stable and inactive complex. The chain is Protamine-3 (PRM3) from Homo sapiens (Human).